The chain runs to 201 residues: Twin horsetail protein 2 (201 aa).

The protein localises to the nucleus. Functionally, required for correct meiotic chromosome segregation and recombination. This is Twin horsetail protein 2 (tht2) from Schizosaccharomyces pombe (strain 972 / ATCC 24843) (Fission yeast).